Consider the following 378-residue polypeptide: Carbazole 1,9a-dioxygenase, terminal oxygenase component CarAa (378 aa).

The region spanning 29-135 (WYPVRLASEI…VEEAKGLIFV (107 aa)) is the Rieske domain. [2Fe-2S] cluster is bound by residues Cys-69, His-71, Cys-90, and His-93.

As to quaternary structure, homotrimer. Carbazole 1,9a-dioxygenase complex consists of a terminal oxygenase component CarAa, a ferredoxin reductase component fdr and a ferredoxin component CarAc. Requires [2Fe-2S] cluster as cofactor.

The enzyme catalyses 9H-carbazole + NADH + O2 + H(+) = 2'-aminobiphenyl-2,3-diol + NAD(+). It carries out the reaction 9H-carbazole + NADPH + O2 + H(+) = 2'-aminobiphenyl-2,3-diol + NADP(+). Part of the multicomponent carbazole 1,9a-dioxygenase (CARDO), that converts carbazole (CAR) into 2-aminobiphenyl-2,3-diol. Catalyzes the dioxygenation at the angular (C-9a) and adjacent (C-1) positions of carbazole to yield a highly unstable cis-hydrodiol intermediate which is spontaneously converted to 2-aminobiphenyl-2,3-diol. The polypeptide is Carbazole 1,9a-dioxygenase, terminal oxygenase component CarAa (carAa) (Sphingomonas sp).